A 559-amino-acid polypeptide reads, in one-letter code: Potassium-transporting ATPase potassium-binding subunit (559 aa).

The next 12 membrane-spanning stretches (helical) occupy residues 5–25, 63–83, 131–151, 173–193, 254–274, 282–302, 327–347, 356–376, 379–399, 416–436, 483–503, and 525–545; these read GFLL…PLGT, LLAI…LLML, VGLT…VFAL, ITLW…IQQG, VQML…GEVV, AILW…MWAE, FGIL…CGAV, ALGG…FGGV, GLYG…LMVG, MIAL…ALAM, LLLA…VMAI, and ALFI…TFIP.

Belongs to the KdpA family. As to quaternary structure, the system is composed of three essential subunits: KdpA, KdpB and KdpC.

Its subcellular location is the cell inner membrane. Functionally, part of the high-affinity ATP-driven potassium transport (or Kdp) system, which catalyzes the hydrolysis of ATP coupled with the electrogenic transport of potassium into the cytoplasm. This subunit binds the periplasmic potassium ions and delivers the ions to the membrane domain of KdpB through an intramembrane tunnel. The sequence is that of Potassium-transporting ATPase potassium-binding subunit from Klebsiella pneumoniae (strain 342).